Here is a 517-residue protein sequence, read N- to C-terminus: Cytochrome P450 monooxygenase ausI (517 aa).

Residues 8–28 (LAPLGQPWIAGLVVVSAVLYL) traverse the membrane as a helical segment. A heme-binding site is contributed by C457.

This sequence belongs to the cytochrome P450 family. Requires heme as cofactor.

The protein localises to the membrane. Its pathway is secondary metabolite biosynthesis; terpenoid biosynthesis. Cytochrome P450 monooxygenase; part of the gene cluster that mediates the biosynthesis of calidodehydroaustin, a fungal meroterpenoid. The first step of the pathway is the synthesis of 3,5-dimethylorsellinic acid by the polyketide synthase ausA. 3,5-dimethylorsellinic acid is then prenylated by the polyprenyl transferase ausN. Further epoxidation by the FAD-dependent monooxygenase ausM and cyclization by the probable terpene cyclase ausL lead to the formation of protoaustinoid A. Protoaustinoid A is then oxidized to spiro-lactone preaustinoid A3 by the combined action of the FAD-binding monooxygenases ausB and ausC, and the dioxygenase ausE. Acid-catalyzed keto-rearrangement and ring contraction of the tetraketide portion of preaustinoid A3 by ausJ lead to the formation of preaustinoid A4. The aldo-keto reductase ausK, with the help of ausH, is involved in the next step by transforming preaustinoid A4 into isoaustinone which is in turn hydroxylated by the P450 monooxygenase ausI to form austinolide. The cytochrome P450 monooxygenase ausG modifies austinolide to austinol. Austinol is further acetylated to austin by the O-acetyltransferase ausP, which spontaneously changes to dehydroaustin. The cytochrome P450 monooxygenase ausR then converts dehydroaustin is into 7-dehydrodehydroaustin. The hydroxylation catalyzed by ausR permits the O-acetyltransferase ausQ to add an additional acetyl group to the molecule, leading to the formation of acetoxydehydroaustin. The short chain dehydrogenase ausT catalyzes the reduction of the double bond present between carbon atoms 1 and 2 to convert 7-dehydrodehydroaustin into 1,2-dihydro-7-hydroxydehydroaustin. AusQ catalyzes not only an acetylation reaction but also the addition of the PKS ausV diketide product to 1,2-dihydro-7-hydroxydehydroaustin, forming precalidodehydroaustin. Finally, the iron/alpha-ketoglutarate-dependent dioxygenase converts precalidodehydroaustin into calidodehydroaustin. This chain is Cytochrome P450 monooxygenase ausI, found in Aspergillus calidoustus.